The following is a 79-amino-acid chain: Sec-independent protein translocase protein TatA (79 aa).

A helical transmembrane segment spans residues 1–21; the sequence is MGGISIWQLLIIALIVVLLFG. Positions 43–79 are disordered; that stretch reads MSSEEDKKALEDTEAAKTAQTTQQATEKKPESNKEQA. The span at 46 to 57 shows a compositional bias: basic and acidic residues; sequence EEDKKALEDTEA. Over residues 58 to 67 the composition is skewed to low complexity; sequence AKTAQTTQQA. Residues 68–79 are compositionally biased toward basic and acidic residues; the sequence is TEKKPESNKEQA.

This sequence belongs to the TatA/E family. In terms of assembly, the Tat system comprises two distinct complexes: a TatABC complex, containing multiple copies of TatA, TatB and TatC subunits, and a separate TatA complex, containing only TatA subunits. Substrates initially bind to the TatABC complex, which probably triggers association of the separate TatA complex to form the active translocon.

It localises to the cell inner membrane. Part of the twin-arginine translocation (Tat) system that transports large folded proteins containing a characteristic twin-arginine motif in their signal peptide across membranes. TatA could form the protein-conducting channel of the Tat system. This chain is Sec-independent protein translocase protein TatA, found in Shewanella putrefaciens (strain CN-32 / ATCC BAA-453).